The following is a 389-amino-acid chain: tRNA(Met) cytidine acetate ligase (389 aa).

ATP-binding positions include 8 to 21 (IAEFNPFHKGHEYL), Gly-97, Asn-153, and Arg-176.

It belongs to the TmcAL family.

The protein localises to the cytoplasm. It catalyses the reaction cytidine(34) in elongator tRNA(Met) + acetate + ATP = N(4)-acetylcytidine(34) in elongator tRNA(Met) + AMP + diphosphate. Catalyzes the formation of N(4)-acetylcytidine (ac(4)C) at the wobble position of elongator tRNA(Met), using acetate and ATP as substrates. First activates an acetate ion to form acetyladenylate (Ac-AMP) and then transfers the acetyl group to tRNA to form ac(4)C34. The polypeptide is tRNA(Met) cytidine acetate ligase (Lactococcus lactis subsp. lactis (strain IL1403) (Streptococcus lactis)).